The following is a 581-amino-acid chain: Probable peptidoglycan D,D-transpeptidase PenA (581 aa).

The chain crosses the membrane as a helical span at residues 28–48 (ISFVLMAMAVLFACLIARGLY). Ser310 (acyl-ester intermediate) is an active-site residue.

It belongs to the transpeptidase family. FtsI subfamily.

It is found in the cell inner membrane. The catalysed reaction is Preferential cleavage: (Ac)2-L-Lys-D-Ala-|-D-Ala. Also transpeptidation of peptidyl-alanyl moieties that are N-acyl substituents of D-alanine.. It participates in cell wall biogenesis; peptidoglycan biosynthesis. Functionally, catalyzes cross-linking of the peptidoglycan cell wall at the division septum. The chain is Probable peptidoglycan D,D-transpeptidase PenA from Neisseria gonorrhoeae.